We begin with the raw amino-acid sequence, 332 residues long: DNA-directed RNA polymerase subunit alpha (332 aa).

The alpha N-terminal domain (alpha-NTD) stretch occupies residues 1-234; that stretch reads MTVTANQVLR…DQLSVFGDFT (234 aa). Residues 248–332 form an alpha C-terminal domain (alpha-CTD) region; it reads VDPVLLRPID…AGVASHGMLG (85 aa).

The protein belongs to the RNA polymerase alpha chain family. Homodimer. The RNAP catalytic core consists of 2 alpha, 1 beta, 1 beta' and 1 omega subunit. When a sigma factor is associated with the core the holoenzyme is formed, which can initiate transcription.

It catalyses the reaction RNA(n) + a ribonucleoside 5'-triphosphate = RNA(n+1) + diphosphate. In terms of biological role, DNA-dependent RNA polymerase catalyzes the transcription of DNA into RNA using the four ribonucleoside triphosphates as substrates. This chain is DNA-directed RNA polymerase subunit alpha, found in Stenotrophomonas maltophilia (strain K279a).